Here is a 138-residue protein sequence, read N- to C-terminus: Lutropin subunit beta (138 aa).

Positions 1–19 are cleaved as a signal peptide; that stretch reads RYQELTVLLLLLLEGGSWG. Intrachain disulfides connect Cys27–Cys75, Cys41–Cys90, Cys44–Cys128, Cys52–Cys106, Cys56–Cys108, and Cys111–Cys118. Asn31 carries an N-linked (GlcNAc...) asparagine glycan.

It belongs to the glycoprotein hormones subunit beta family. In terms of assembly, heterodimer of a common alpha chain and a unique beta chain which confers biological specificity to thyrotropin, lutropin, follitropin and gonadotropin.

It localises to the secreted. Functionally, promotes spermatogenesis and ovulation by stimulating the testes and ovaries to synthesize steroids. The chain is Lutropin subunit beta (LHB) from Osphranter rufus (Red kangaroo).